A 70-amino-acid polypeptide reads, in one-letter code: Translational regulator CsrA (70 aa).

The protein belongs to the CsrA/RsmA family. In terms of assembly, homodimer; the beta-strands of each monomer intercalate to form a hydrophobic core, while the alpha-helices form wings that extend away from the core.

The protein localises to the cytoplasm. In terms of biological role, a translational regulator that binds mRNA to regulate translation initiation and/or mRNA stability. Usually binds in the 5'-UTR at or near the Shine-Dalgarno sequence preventing ribosome-binding, thus repressing translation. Its main target seems to be the major flagellin gene, while its function is anatagonized by FliW. This is Translational regulator CsrA from Rhodopirellula baltica (strain DSM 10527 / NCIMB 13988 / SH1).